A 490-amino-acid polypeptide reads, in one-letter code: Aspartyl/glutamyl-tRNA(Asn/Gln) amidotransferase subunit B (490 aa).

The protein belongs to the GatB/GatE family. GatB subfamily. In terms of assembly, heterotrimer of A, B and C subunits.

The catalysed reaction is L-glutamyl-tRNA(Gln) + L-glutamine + ATP + H2O = L-glutaminyl-tRNA(Gln) + L-glutamate + ADP + phosphate + H(+). It catalyses the reaction L-aspartyl-tRNA(Asn) + L-glutamine + ATP + H2O = L-asparaginyl-tRNA(Asn) + L-glutamate + ADP + phosphate + 2 H(+). Its function is as follows. Allows the formation of correctly charged Asn-tRNA(Asn) or Gln-tRNA(Gln) through the transamidation of misacylated Asp-tRNA(Asn) or Glu-tRNA(Gln) in organisms which lack either or both of asparaginyl-tRNA or glutaminyl-tRNA synthetases. The reaction takes place in the presence of glutamine and ATP through an activated phospho-Asp-tRNA(Asn) or phospho-Glu-tRNA(Gln). This Zymomonas mobilis subsp. mobilis (strain ATCC 31821 / ZM4 / CP4) protein is Aspartyl/glutamyl-tRNA(Asn/Gln) amidotransferase subunit B.